The chain runs to 397 residues: Argininosuccinate synthase (397 aa).

9 to 17 (AYSGGLDTS) is an ATP binding site. L-citrulline is bound at residue Tyr-87. Residue Gly-117 coordinates ATP. 3 residues coordinate L-aspartate: Thr-119, Asn-123, and Asp-124. Residue Asn-123 coordinates L-citrulline. Residues Arg-127, Ser-175, Ser-184, Glu-257, and Tyr-269 each coordinate L-citrulline.

Belongs to the argininosuccinate synthase family. Type 1 subfamily. In terms of assembly, homotetramer.

It is found in the cytoplasm. The catalysed reaction is L-citrulline + L-aspartate + ATP = 2-(N(omega)-L-arginino)succinate + AMP + diphosphate + H(+). It participates in amino-acid biosynthesis; L-arginine biosynthesis; L-arginine from L-ornithine and carbamoyl phosphate: step 2/3. The polypeptide is Argininosuccinate synthase (Dictyoglomus thermophilum (strain ATCC 35947 / DSM 3960 / H-6-12)).